The chain runs to 71 residues: MIRSLPTMTVLIPLVSLAGLLYSASVEEGFPEGCTSASSLCFYSLLLPVTVPVYVFFHLWTWMGLKLFRHN.

The Cytoplasmic portion of the chain corresponds to 1–5 (MIRSL). Residues 6–26 (PTMTVLIPLVSLAGLLYSASV) form a helical membrane-spanning segment. The Lumenal segment spans residues 27-44 (EEGFPEGCTSASSLCFYS). Residues 45–65 (LLLPVTVPVYVFFHLWTWMGL) form a helical membrane-spanning segment. At 66-71 (KLFRHN) the chain is on the cytoplasmic side.

As to quaternary structure, component of the glycosylphosphatidylinositol-N-acetylglucosaminyltransferase (GPI-GnT) complex composed at least by PIGA, PIGC, PIGH, PIGP, PIGQ, PIGY and DPM2. Interacts directly with PIGA; this interaction regulates glycosylphosphatidylinositol-N-acetylglucosaminyltransferase activity. Does not interact with Ras proteins.

The protein resides in the endoplasmic reticulum membrane. It participates in glycolipid biosynthesis; glycosylphosphatidylinositol-anchor biosynthesis. Part of the glycosylphosphatidylinositol-N-acetylglucosaminyltransferase (GPI-GnT) complex that catalyzes the transfer of N-acetylglucosamine from UDP-N-acetylglucosamine to phosphatidylinositol and participates in the first step of GPI biosynthesis. May act by regulating the catalytic subunit PIGA. The sequence is that of Phosphatidylinositol N-acetylglucosaminyltransferase subunit Y from Mus musculus (Mouse).